A 222-amino-acid chain; its full sequence is Deoxyribose-phosphate aldolase (222 aa).

Asp89 serves as the catalytic Proton donor/acceptor. Lys151 (schiff-base intermediate with acetaldehyde) is an active-site residue. Residue Lys180 is the Proton donor/acceptor of the active site.

This sequence belongs to the DeoC/FbaB aldolase family. DeoC type 1 subfamily.

Its subcellular location is the cytoplasm. It catalyses the reaction 2-deoxy-D-ribose 5-phosphate = D-glyceraldehyde 3-phosphate + acetaldehyde. It participates in carbohydrate degradation; 2-deoxy-D-ribose 1-phosphate degradation; D-glyceraldehyde 3-phosphate and acetaldehyde from 2-deoxy-alpha-D-ribose 1-phosphate: step 2/2. In terms of biological role, catalyzes a reversible aldol reaction between acetaldehyde and D-glyceraldehyde 3-phosphate to generate 2-deoxy-D-ribose 5-phosphate. In Acholeplasma laidlawii (strain PG-8A), this protein is Deoxyribose-phosphate aldolase.